Reading from the N-terminus, the 294-residue chain is MAALQEKKSCSQRMAEFRHYCWNPDTGQMLGRTPARWVWISLYYAGFYVVMTGLFALCIYVLMQTIDPYTPDYQDQLKSPGVTLRPDVYGERGLKISYNVSENSSWAGLTHTLHSFLAGYTPASQQDSINCTSEKYFFQESFAAPNHTKFSCKFTADMLQNCSGLADPSFGFEEGKPCFIIKMNRIVKFLPSNNTAPRVDCTFQDDPQKPRKDTEPLQVEYYPPNGTFSLHYFPYYGKKAQPHYSNPLVAAKLLNVPKNMQVSIVCKILADHVTFNNPHDPYEGKVEFKLTIQK.

At 1 to 36 (MAALQEKKSCSQRMAEFRHYCWNPDTGQMLGRTPAR) the chain is on the cytoplasmic side. The helical; Signal-anchor for type II membrane protein transmembrane segment at 37 to 57 (WVWISLYYAGFYVVMTGLFAL) threads the bilayer. Residues 58–294 (CIYVLMQTID…KVEFKLTIQK (237 aa)) lie on the Extracellular side of the membrane. N-linked (GlcNAc...) asparagine glycans are attached at residues Asn-99, Asn-103, Asn-130, Asn-146, and Asn-161. An intrachain disulfide couples Cys-131 to Cys-152. Cys-162 and Cys-178 are disulfide-bonded. Asn-193 and Asn-225 each carry an N-linked (GlcNAc...) asparagine glycan. An immunoglobulin-like region spans residues 194 to 294 (NTAPRVDCTF…KVEFKLTIQK (101 aa)). Cys-201 and Cys-266 are joined by a disulfide.

The protein belongs to the X(+)/potassium ATPases subunit beta family. As to quaternary structure, the ATPase pump is composed of two subunits: alpha (catalytic) and beta (regulatory). Interacts with alpha subunit ATP12A; this interaction is required for the formation of a functionally active pump and targeting at the plasma membrane. Interacts (via N-terminus) with alpha subunit ATP4A (via the P-domain). In terms of processing, N-glycosylation is necessary for assembly and functional expression of the pump at the plasma membrane. Expressed in parietal cells (at protein level).

Its subcellular location is the apical cell membrane. The protein resides in the cell membrane. In terms of biological role, the beta subunit of the gastric H(+)/K(+) ATPase pump which transports H(+) ions in exchange for K(+) ions across the apical membrane of parietal cells. Plays a structural and regulatory role in the assembly and membrane targeting of a functionally active pump. Within a transport cycle, the transfer of a H(+) ion across the membrane is coupled to ATP hydrolysis and is associated with a transient phosphorylation of the alpha subunit that shifts the pump conformation from inward-facing (E1) to outward-facing state (E2). Interacts with the phosphorylation domain of the alpha subunit and functions as a ratchet, stabilizing the lumenal-open E2 conformation and preventing the reverse reaction of the transport cycle. This Mus musculus (Mouse) protein is Potassium-transporting ATPase subunit beta (Atp4b).